Reading from the N-terminus, the 617-residue chain is MERIDTTGRLSRLRELMKERNVDVYVIPSEDSHASEYIAGCDARREFISGFSGSAGCAVVTLDKAALATDGRYFNQASKQLDQNWLLLKQGLQDVPTWQEWSAEQSAGGKVVGVDPELITGSIAKKLTEKVKRSGGSDLVPLDENLVDLVWAEARPARPKNPIKVLPEKFSGKDVKTKLKELRQELDRKNSRAFVVSMLDEIAWLFNLRGDDIPYNPVFFSYAIITSDSATLYVDASKLGEETRAYLADNDVCVKPYDIVFDSINTLRSSDTSCQTTSGVSSKRFMISTKASWALKRSLGGDSQVDEVRSPIGDSKAVKNKSEMAGMRACHIRDGAALIEYFAWLEDQLVAKKVKLDEVQAADKLEQLRSKQKDYVGLSFDTISSTGANAAVIHYKPERGACSIIDPTAIYLCDSGAQYLDGTTDTTRTLHFGQPTEAEKLAYTLVLKGNIALDTAIFPKGTTGFAIDCLARQHLWKEGLDYRHGTGHGVGSYLNVHEGPIGIGTRVQFAEVALAPGNVLSIEPGFYEDGSYGIRIENVAMVTEVKTKHSFGDKPYLGFEHVTMVPYCRNLIEPNLLTAEEKAWLNAHHADILQKTKGYFQDDPLTMTWLARETQPL.

Residues Asp414, Asp425, Glu523, and Glu537 each contribute to the Mn(2+) site.

The protein belongs to the peptidase M24B family. Requires Mn(2+) as cofactor.

It catalyses the reaction Release of any N-terminal amino acid, including proline, that is linked to proline, even from a dipeptide or tripeptide.. Functionally, catalyzes the removal of a penultimate prolyl residue from the N-termini of peptides. This is Probable Xaa-Pro aminopeptidase P (AMPP) from Colletotrichum graminicola (strain M1.001 / M2 / FGSC 10212) (Maize anthracnose fungus).